We begin with the raw amino-acid sequence, 513 residues long: V-type proton ATPase subunit B, kidney isoform (513 aa).

Arg394 is a binding site for ATP. Positions 510-513 (DTAL) match the PDZ-binding motif.

Belongs to the ATPase alpha/beta chains family. V-ATPase is a heteromultimeric enzyme made up of two complexes: the ATP-hydrolytic V1 complex and the proton translocation V0 complex. The V1 complex consists of three catalytic AB heterodimers that form a heterohexamer, three peripheral stalks each consisting of EG heterodimers, one central rotor including subunits D and F, and the regulatory subunits C and H. The proton translocation complex V0 consists of the proton transport subunit a, a ring of proteolipid subunits c9c'', rotary subunit d, subunits e and f, and the accessory subunits ATP6AP1/Ac45 and ATP6AP2/PRR. Forms a complex with NHERF1 and SCL4A7. In terms of tissue distribution, kidney; localizes to early distal nephron, encompassing thick ascending limbs and distal convoluted tubules (at protein level). Expressed in the cochlea and endolymphatic sac.

It localises to the apical cell membrane. The protein localises to the basolateral cell membrane. In terms of biological role, non-catalytic subunit of the V1 complex of vacuolar(H+)-ATPase (V-ATPase), a multisubunit enzyme composed of a peripheral complex (V1) that hydrolyzes ATP and a membrane integral complex (V0) that translocates protons. V-ATPase is responsible for acidifying and maintaining the pH of intracellular compartments and in some cell types, is targeted to the plasma membrane, where it is responsible for acidifying the extracellular environment. Essential for the proper assembly and activity of V-ATPase. In renal intercalated cells, mediates secretion of protons (H+) into the urine thereby ensuring correct urinary acidification. Required for optimal olfactory function by mediating the acidification of the nasal olfactory epithelium. The protein is V-type proton ATPase subunit B, kidney isoform (ATP6V1B1) of Homo sapiens (Human).